The following is a 121-amino-acid chain: Small ribosomal subunit protein uS13 (121 aa).

The segment at S94 to K121 is disordered. A compositionally biased stretch (basic residues) spans S106–K121.

It belongs to the universal ribosomal protein uS13 family. In terms of assembly, part of the 30S ribosomal subunit. Forms a loose heterodimer with protein S19. Forms two bridges to the 50S subunit in the 70S ribosome.

Functionally, located at the top of the head of the 30S subunit, it contacts several helices of the 16S rRNA. In the 70S ribosome it contacts the 23S rRNA (bridge B1a) and protein L5 of the 50S subunit (bridge B1b), connecting the 2 subunits; these bridges are implicated in subunit movement. Contacts the tRNAs in the A and P-sites. This chain is Small ribosomal subunit protein uS13, found in Exiguobacterium sp. (strain ATCC BAA-1283 / AT1b).